A 117-amino-acid chain; its full sequence is MSSHVPADMINLRLILVSGKTKEFLFSPNDSASDIAKHVYDNWPMDWEEEQVSSPNILRLIYQGRFLHGNVTLGALKLPFGKTTVMHLVARETLPEPNSQGQRNREKTGESNCCVIL.

In terms of domain architecture, Ubiquitin-like spans 10 to 88 (INLRLILVSG…PFGKTTVMHL (79 aa)). Cysteine 113 carries S-palmitoyl cysteine lipidation. Cysteine 114 is modified (cysteine methyl ester). The S-geranylgeranyl cysteine moiety is linked to residue cysteine 114. A propeptide spans 115 to 117 (VIL) (removed in mature form).

The protein resides in the cell membrane. The chain is Ubiquitin-like protein 3 (Ubl3) from Mus musculus (Mouse).